Reading from the N-terminus, the 476-residue chain is FAD-dependent monooxygenase dpasE (476 aa).

The signal sequence occupies residues 1–21 (MSQPAFKIIIVGCSVTGLTLA). FAD-binding residues include Glu-35, Ala-49, and Arg-109. N-linked (GlcNAc...) asparagine glycans are attached at residues Asn-190 and Asn-219. FAD is bound by residues Asp-308 and Ala-321. The helical transmembrane segment at 441-461 (GAGFWITAFLSLSLLAVAATM) threads the bilayer.

Belongs to the paxM FAD-dependent monooxygenase family. Requires FAD as cofactor.

The protein resides in the membrane. The protein operates within secondary metabolite biosynthesis; terpenoid biosynthesis. Functionally, FAD-dependent monooxygenase; part of the gene cluster that mediates the biosynthesis of the diterpenoid pyrones subglutinols A and B. The first step of the pathway is the synthesis of the alpha-pyrone moiety by the polyketide synthase dpasA via condensation of one acetyl-CoA starter unit with 3 malonyl-CoA units and 2 methylations. The alpha-pyrone is then combined with geranylgeranyl pyrophosphate (GGPP) formed by the GGPP synthase dpasD through the action of the prenyltransferase dpasC to yield a linear alpha-pyrone diterpenoid. Subsequent steps in the diterpenoid pyrone biosynthetic pathway involve the decalin core formation, which is initiated by the epoxidation of the C10-C11 olefin by the FAD-dependent oxidoreductase dpasE, and is followed by a cyclization cascade catalyzed by the terpene cyclase dpasB. The FAD-linked oxidoreductase dpasF is then involved in tetrahydrofuran (THF) ring formation at the C5 unit to complete the formation of subglutinols A and B. DpasF possesses also an additional catalytic ability of multi-step oxidations to generate a new DDP analog with an enone system at the C5 named FDDP A. This chain is FAD-dependent monooxygenase dpasE, found in Apiospora sacchari (Arthrinium sacchari).